We begin with the raw amino-acid sequence, 222 residues long: Sugar fermentation stimulation protein homolog (222 aa).

It belongs to the SfsA family.

This Thermoplasma acidophilum (strain ATCC 25905 / DSM 1728 / JCM 9062 / NBRC 15155 / AMRC-C165) protein is Sugar fermentation stimulation protein homolog.